The sequence spans 386 residues: Patatin-04/09 (386 aa).

A signal peptide spans 1 to 23 (MATTKSFLILFFMILATTSSTCA). Residues 32-229 (LSIDGGGIKG…TVGDPALLSL (198 aa)) form the PNPLA domain. A GXGXXG motif is present at residues 36–41 (GGGIKG). A GXSXG motif is present at residues 75–79 (GTSTG). Ser-77 functions as the Nucleophile in the catalytic mechanism. Residue Asn-115 is glycosylated (N-linked (GlcNAc...) asparagine). Asp-215 serves as the catalytic Proton acceptor. Residues 215–217 (DGG) carry the DGA/G motif. A coiled-coil region spans residues 321 to 384 (ENALNGTTTE…DRKKLRANKA (64 aa)). Asn-325 carries N-linked (GlcNAc...) asparagine glycosylation.

It belongs to the patatin family. Tuber.

Its subcellular location is the vacuole. Functionally, probable lipolytic acyl hydrolase (LAH), an activity which is thought to be involved in the response of tubers to pathogens. This is Patatin-04/09 from Solanum tuberosum (Potato).